The primary structure comprises 338 residues: Fusarubin cluster-specific transcription factor fsr6 (338 aa).

Residues 16–44 (CDACTTAKVRCSRTHPCERCEDNGQAKEC) constitute a DNA-binding region (zn(2)-C6 fungal-type).

It localises to the nucleus. Functionally, transcription factor that regulates the expression of the gene cluster that mediates the biosynthesis of fusarubins, highly pigmented naphthoquinones responsible for the coloration of the fruiting bodies. This chain is Fusarubin cluster-specific transcription factor fsr6, found in Gibberella fujikuroi (strain CBS 195.34 / IMI 58289 / NRRL A-6831) (Bakanae and foot rot disease fungus).